The sequence spans 442 residues: UPF0597 protein HRM2_02820 (442 aa).

This sequence belongs to the UPF0597 family.

The sequence is that of UPF0597 protein HRM2_02820 from Desulforapulum autotrophicum (strain ATCC 43914 / DSM 3382 / VKM B-1955 / HRM2) (Desulfobacterium autotrophicum).